A 211-amino-acid polypeptide reads, in one-letter code: Imidazole glycerol phosphate synthase subunit HisH (211 aa).

The 209-residue stretch at 3–211 folds into the Glutamine amidotransferase type-1 domain; it reads VIAVVDYEMG…VAQVREKIPA (209 aa). The active-site Nucleophile is cysteine 81. Catalysis depends on residues histidine 186 and glutamate 188.

In terms of assembly, heterodimer of HisH and HisF.

It is found in the cytoplasm. It carries out the reaction 5-[(5-phospho-1-deoxy-D-ribulos-1-ylimino)methylamino]-1-(5-phospho-beta-D-ribosyl)imidazole-4-carboxamide + L-glutamine = D-erythro-1-(imidazol-4-yl)glycerol 3-phosphate + 5-amino-1-(5-phospho-beta-D-ribosyl)imidazole-4-carboxamide + L-glutamate + H(+). The enzyme catalyses L-glutamine + H2O = L-glutamate + NH4(+). Its pathway is amino-acid biosynthesis; L-histidine biosynthesis; L-histidine from 5-phospho-alpha-D-ribose 1-diphosphate: step 5/9. Its function is as follows. IGPS catalyzes the conversion of PRFAR and glutamine to IGP, AICAR and glutamate. The HisH subunit catalyzes the hydrolysis of glutamine to glutamate and ammonia as part of the synthesis of IGP and AICAR. The resulting ammonia molecule is channeled to the active site of HisF. This Nostoc punctiforme (strain ATCC 29133 / PCC 73102) protein is Imidazole glycerol phosphate synthase subunit HisH.